Here is a 373-residue protein sequence, read N- to C-terminus: Queuine tRNA-ribosyltransferase (373 aa).

D91 (proton acceptor) is an active-site residue. Substrate contacts are provided by residues 91 to 95 (DSGGF), D145, Q187, and G214. The segment at 245 to 251 (GVGKPED) is RNA binding. The active-site Nucleophile is the D264. An RNA binding; important for wobble base 34 recognition region spans residues 269 to 273 (TRNAR). Residues C302, C304, C307, and H333 each contribute to the Zn(2+) site.

This sequence belongs to the queuine tRNA-ribosyltransferase family. In terms of assembly, homodimer. Within each dimer, one monomer is responsible for RNA recognition and catalysis, while the other monomer binds to the replacement base PreQ1. Zn(2+) serves as cofactor.

It carries out the reaction 7-aminomethyl-7-carbaguanine + guanosine(34) in tRNA = 7-aminomethyl-7-carbaguanosine(34) in tRNA + guanine. It participates in tRNA modification; tRNA-queuosine biosynthesis. Its function is as follows. Catalyzes the base-exchange of a guanine (G) residue with the queuine precursor 7-aminomethyl-7-deazaguanine (PreQ1) at position 34 (anticodon wobble position) in tRNAs with GU(N) anticodons (tRNA-Asp, -Asn, -His and -Tyr). Catalysis occurs through a double-displacement mechanism. The nucleophile active site attacks the C1' of nucleotide 34 to detach the guanine base from the RNA, forming a covalent enzyme-RNA intermediate. The proton acceptor active site deprotonates the incoming PreQ1, allowing a nucleophilic attack on the C1' of the ribose to form the product. After dissociation, two additional enzymatic reactions on the tRNA convert PreQ1 to queuine (Q), resulting in the hypermodified nucleoside queuosine (7-(((4,5-cis-dihydroxy-2-cyclopenten-1-yl)amino)methyl)-7-deazaguanosine). The protein is Queuine tRNA-ribosyltransferase of Idiomarina loihiensis (strain ATCC BAA-735 / DSM 15497 / L2-TR).